The chain runs to 488 residues: 3-octaprenyl-4-hydroxybenzoate carboxy-lyase (488 aa).

Residue Asn-172 coordinates Mn(2+). Residues 175-177 (IYR), 189-191 (RWL), and 194-195 (RG) each bind prenylated FMN. Glu-238 contributes to the Mn(2+) binding site. Asp-287 acts as the Proton donor in catalysis.

It belongs to the UbiD family. Homohexamer. The cofactor is prenylated FMN. Requires Mn(2+) as cofactor.

It localises to the cell membrane. The catalysed reaction is a 4-hydroxy-3-(all-trans-polyprenyl)benzoate + H(+) = a 2-(all-trans-polyprenyl)phenol + CO2. Its pathway is cofactor biosynthesis; ubiquinone biosynthesis. Its function is as follows. Catalyzes the decarboxylation of 3-octaprenyl-4-hydroxy benzoate to 2-octaprenylphenol, an intermediate step in ubiquinone biosynthesis. The sequence is that of 3-octaprenyl-4-hydroxybenzoate carboxy-lyase from Halorhodospira halophila (strain DSM 244 / SL1) (Ectothiorhodospira halophila (strain DSM 244 / SL1)).